A 549-amino-acid polypeptide reads, in one-letter code: Alpha-amylase (549 aa).

The signal sequence occupies residues 1-34; it reads MLTFHRIIRKGWMFLLAFLLTALLFCPTGQPAKA. Positions 139, 196, 218, 220, 231, and 237 each coordinate Ca(2+). Position 196 (Asp-196) interacts with Na(+). Na(+) is bound by residues Asp-220, Asp-231, Asp-237, and Leu-238. Asp-239 contacts Ca(2+). The active-site Nucleophile is the Asp-268. Residue His-272 coordinates Ca(2+). Glu-298 functions as the Proton donor in the catalytic mechanism. Residues Gly-337, Phe-339, Ser-440, Asp-441, and Asp-464 each coordinate Ca(2+).

It belongs to the glycosyl hydrolase 13 family. As to quaternary structure, monomer. Requires Ca(2+) as cofactor. The cofactor is Na(+).

It localises to the secreted. It catalyses the reaction Endohydrolysis of (1-&gt;4)-alpha-D-glucosidic linkages in polysaccharides containing three or more (1-&gt;4)-alpha-linked D-glucose units.. In Geobacillus stearothermophilus (Bacillus stearothermophilus), this protein is Alpha-amylase (amyS).